The chain runs to 495 residues: Lysine--tRNA ligase (495 aa).

Residues glutamate 406 and glutamate 413 each coordinate Mg(2+).

The protein belongs to the class-II aminoacyl-tRNA synthetase family. As to quaternary structure, homodimer. It depends on Mg(2+) as a cofactor.

The protein resides in the cytoplasm. The catalysed reaction is tRNA(Lys) + L-lysine + ATP = L-lysyl-tRNA(Lys) + AMP + diphosphate. This chain is Lysine--tRNA ligase, found in Staphylococcus aureus (strain MW2).